Consider the following 554-residue polypeptide: 3-(3-hydroxy-phenyl)propionate/3-hydroxycinnamic acid hydroxylase (554 aa).

FAD is bound by residues 17 to 46 and 285 to 295; these read QVAI…VVEK and FRINRVLLAGD.

The protein belongs to the PheA/TfdB FAD monooxygenase family. The cofactor is FAD.

It catalyses the reaction 3-(3-hydroxyphenyl)propanoate + NADH + O2 + H(+) = 3-(2,3-dihydroxyphenyl)propanoate + NAD(+) + H2O. The catalysed reaction is (2E)-3-(3-hydroxyphenyl)prop-2-enoate + NADH + O2 + H(+) = (2E)-3-(2,3-dihydroxyphenyl)prop-2-enoate + NAD(+) + H2O. It functions in the pathway aromatic compound metabolism; 3-phenylpropanoate degradation. In terms of biological role, catalyzes the insertion of one atom of molecular oxygen into position 2 of the phenyl ring of 3-(3-hydroxyphenyl)propionate (3-HPP) and hydroxycinnamic acid (3HCI). This chain is 3-(3-hydroxy-phenyl)propionate/3-hydroxycinnamic acid hydroxylase, found in Klebsiella pneumoniae subsp. pneumoniae (strain ATCC 700721 / MGH 78578).